The sequence spans 266 residues: CD82 antigen (266 aa).

At 1–11 the chain is on the cytoplasmic side; sequence MGAGCVKVTKY. Cys5 is lipidated: S-palmitoyl cysteine. Residues 12-32 form a helical membrane-spanning segment; sequence FLFLFNLLFFILGAVILGFGV. Topologically, residues 33–53 are extracellular; it reads WILADKNSFISVLQTSSSSLQ. A helical transmembrane segment spans residues 54–72; the sequence is VGAYVFIGVGAITIVMGFL. At 73–83 the chain is on the cytoplasmic side; it reads GCIGAVNEVRC. Cys74 carries S-palmitoyl cysteine lipidation. A helical membrane pass occupies residues 84-110; sequence LLGLYFVFLLLILIAQVTVGVLFYFNA. Over 111 to 227 the chain is Extracellular; sequence DKLKKEMGNT…KAQAWLQENF (117 aa). Residues Asn127, Asn131, Asn157, and Asn197 are each glycosylated (N-linked (GlcNAc...) asparagine). The helical transmembrane segment at 228-249 threads the bilayer; it reads GILLGVCAGVAVIELLGLFLSI. The Cytoplasmic segment spans residues 250-266; that stretch reads CLCRYIHSEDYSKVPKY.

Belongs to the tetraspanin (TM4SF) family. In terms of assembly, forms homooligomers. Interacts directly with IGSF8. Interacts with EGFR. Interacts with VEGFA and PDGFA. Interacts with ITGA4. Interacts with ITGA6; this interaction reduces ITGA6 cell surface expression. Interacts with ITGB1. Interacts with TLR4; this interaction inhibits TLR4-mediated signaling pathway. Interacts with TLR9. Interacts with PLAUR. Palmitoylated. Palmitoylation contributes to oligomerization and surface expression. As to expression, highest expression in the spleen and the kidney. Low expression in skeletal muscle and in the heart.

Its subcellular location is the cell membrane. It localises to the cytoplasmic vesicle. The protein resides in the phagosome. Functionally, structural component of specialized membrane microdomains known as tetraspanin-enriched microdomains (TERMs), which act as platforms for receptor clustering and signaling. Participates thereby in diverse biological functions such as cell signal transduction, adhesion, migration and protein trafficking. Acts as a attenuator of EGF signaling, facilitating ligand-induced endocytosis of the receptor and its subsequent desensitization. Mechanistically, modulates ligand-induced ubiquitination and trafficking of EGFR via E3 ligase CBL phosphorylation by PKC. Increases cell-matrix adhesion by regulating the membrane organization of integrin alpha4/ITA4. Modulates adhesion and suppresses cell migration through other integrins such as the alpha6/ITGA6 and beta1/ITGB1. Decreases cell-associated plasminogen activation by interfering with the interaction between urokinase-type plasminogen activator/PLAU and its receptor PLAUR. Associates with CD4 or CD8 and delivers costimulatory signals for the TCR/CD3 pathway. Plays a role in the restrains phagocyte migration but supports macrophage activation. Plays a role in TLR9 trafficking to acidified CpG-containing compartments by controlling interaction between TLR9 and VAMP3 and subsequent myddosome assembly. Inhibits LPS-induced inflammatory response by preventing binding of LPS to TLR4 on the cell surface. Plays a role in the activation of macrophages into anti-inflammatory phenotypes. Independently of Toll-like receptor (TLR) signaling, is recruited to pathogen-containing phagosomes prior to fusion with lysosomes and participates in antigen presentation. Also acts to control angiogenesis and switch angiogenic milieu to quiescent state by binding and sequestering VEGFA and PDGFA to inhibit the signaling they trigger via their respective cell surface receptor. This chain is CD82 antigen (Cd82), found in Mus musculus (Mouse).